Reading from the N-terminus, the 466-residue chain is RUS family member 1 (466 aa).

The residue at position 2 (Ala-2) is an N-acetylalanine. Residues 245–265 traverse the membrane as a helical segment; the sequence is LLMLPLVSDCPSLSLGCFVLL.

It belongs to the RUS1 family.

It localises to the membrane. The sequence is that of RUS family member 1 from Mus musculus (Mouse).